The sequence spans 591 residues: L-fucose isomerase (591 aa).

Residues Glu-337 and Asp-361 each act as proton acceptor in the active site. Mn(2+) contacts are provided by Glu-337, Asp-361, and His-528.

The protein belongs to the L-fucose isomerase family. In terms of assembly, homohexamer. Mn(2+) is required as a cofactor.

It localises to the cytoplasm. It catalyses the reaction L-fucose = L-fuculose. The protein operates within carbohydrate degradation; L-fucose degradation; L-lactaldehyde and glycerone phosphate from L-fucose: step 1/3. Functionally, converts the aldose L-fucose into the corresponding ketose L-fuculose. The chain is L-fucose isomerase from Escherichia coli O17:K52:H18 (strain UMN026 / ExPEC).